The following is a 543-amino-acid chain: Hydroxylamine reductase (543 aa).

Positions 3, 6, 15, and 21 each coordinate [4Fe-4S] cluster. The hybrid [4Fe-2O-2S] cluster site is built by His-239, Glu-263, Cys-307, Cys-398, Cys-426, Cys-451, Glu-486, and Lys-488. Cys-398 is subject to Cysteine persulfide.

Belongs to the HCP family. [4Fe-4S] cluster serves as cofactor. Hybrid [4Fe-2O-2S] cluster is required as a cofactor.

The protein localises to the cytoplasm. The catalysed reaction is A + NH4(+) + H2O = hydroxylamine + AH2 + H(+). Its function is as follows. Catalyzes the reduction of hydroxylamine to form NH(3) and H(2)O. The protein is Hydroxylamine reductase of Methanococcus vannielii (strain ATCC 35089 / DSM 1224 / JCM 13029 / OCM 148 / SB).